The sequence spans 216 residues: Adenylate kinase (216 aa).

10–15 (GAGKGT) provides a ligand contact to ATP. The interval 30-59 (STGDMLRAAVGVGTEVGKRAKAVMDAGKLV) is NMP. AMP is bound by residues Thr31, Arg36, 57-59 (KLV), 85-88 (GFPR), and Gln92. Residues 126–163 (GRYTCAQCGTVYHDTDKVPVEEGVCDKCGSTHFKRRPD) are LID. Arg127 serves as a coordination point for ATP. Residues Cys130 and Cys133 each contribute to the Zn(2+) site. ATP is bound at residue 136 to 137 (VY). The Zn(2+) site is built by Cys150 and Cys153. Residues Arg160 and Arg172 each coordinate AMP. An ATP-binding site is contributed by Ala200.

Belongs to the adenylate kinase family. As to quaternary structure, monomer.

It localises to the cytoplasm. The catalysed reaction is AMP + ATP = 2 ADP. It participates in purine metabolism; AMP biosynthesis via salvage pathway; AMP from ADP: step 1/1. Functionally, catalyzes the reversible transfer of the terminal phosphate group between ATP and AMP. Plays an important role in cellular energy homeostasis and in adenine nucleotide metabolism. The sequence is that of Adenylate kinase from Rhizobium etli (strain CIAT 652).